We begin with the raw amino-acid sequence, 397 residues long: Tryptophan synthase beta chain (397 aa).

The residue at position 88 (K88) is an N6-(pyridoxal phosphate)lysine.

It belongs to the TrpB family. Tetramer of two alpha and two beta chains. It depends on pyridoxal 5'-phosphate as a cofactor.

The enzyme catalyses (1S,2R)-1-C-(indol-3-yl)glycerol 3-phosphate + L-serine = D-glyceraldehyde 3-phosphate + L-tryptophan + H2O. It functions in the pathway amino-acid biosynthesis; L-tryptophan biosynthesis; L-tryptophan from chorismate: step 5/5. In terms of biological role, the beta subunit is responsible for the synthesis of L-tryptophan from indole and L-serine. This chain is Tryptophan synthase beta chain, found in Haemophilus influenzae (strain PittEE).